Reading from the N-terminus, the 678-residue chain is Penicillin-binding protein activator LpoA (678 aa).

A signal peptide spans 1–26 (MVPSTFSRLKAARCLPVVLAALIFAG). C27 carries N-palmitoyl cysteine lipidation. The S-diacylglycerol cysteine moiety is linked to residue C27. Composition is skewed to low complexity over residues 300 to 310 (AADVAEQPQPQ), 330 to 340 (QPAAQPVPVSA), and 513 to 528 (TTNN…DDQF). Disordered stretches follow at residues 300-340 (AADV…PVSA) and 496-528 (ALTG…DDQF).

This sequence belongs to the LpoA family. As to quaternary structure, interacts with PBP1a.

The protein resides in the cell outer membrane. Functionally, regulator of peptidoglycan synthesis that is essential for the function of penicillin-binding protein 1A (PBP1a). The protein is Penicillin-binding protein activator LpoA of Shigella flexneri serotype 5b (strain 8401).